The primary structure comprises 32 residues: Zinc metalloproteinase/disintegrin-like CdtV1 (32 aa).

Intrachain disulfides connect Cys-5-Cys-14 and Cys-7-Cys-15.

This sequence belongs to the venom metalloproteinase (M12B) family. P-II subfamily. P-IIa sub-subfamily. Monomer. In terms of tissue distribution, expressed by the venom gland.

It localises to the secreted. Snake venom metalloproteinase that impairs hemostasis in the envenomed animal. The protein is Zinc metalloproteinase/disintegrin-like CdtV1 of Crotalus durissus terrificus (South American rattlesnake).